The following is a 195-amino-acid chain: 3-isopropylmalate dehydratase small subunit (195 aa).

It belongs to the LeuD family. LeuD type 1 subfamily. Heterodimer of LeuC and LeuD.

It carries out the reaction (2R,3S)-3-isopropylmalate = (2S)-2-isopropylmalate. Its pathway is amino-acid biosynthesis; L-leucine biosynthesis; L-leucine from 3-methyl-2-oxobutanoate: step 2/4. Functionally, catalyzes the isomerization between 2-isopropylmalate and 3-isopropylmalate, via the formation of 2-isopropylmaleate. This chain is 3-isopropylmalate dehydratase small subunit, found in Frankia alni (strain DSM 45986 / CECT 9034 / ACN14a).